The sequence spans 315 residues: Methionyl-tRNA formyltransferase (315 aa).

113-116 contacts (6S)-5,6,7,8-tetrahydrofolate; it reads SLLP.

The protein belongs to the Fmt family.

The enzyme catalyses L-methionyl-tRNA(fMet) + (6R)-10-formyltetrahydrofolate = N-formyl-L-methionyl-tRNA(fMet) + (6S)-5,6,7,8-tetrahydrofolate + H(+). In terms of biological role, attaches a formyl group to the free amino group of methionyl-tRNA(fMet). The formyl group appears to play a dual role in the initiator identity of N-formylmethionyl-tRNA by promoting its recognition by IF2 and preventing the misappropriation of this tRNA by the elongation apparatus. The sequence is that of Methionyl-tRNA formyltransferase from Klebsiella pneumoniae (strain 342).